Consider the following 356-residue polypeptide: 3-isopropylmalate dehydrogenase (356 aa).

Residues Arg-95, Arg-105, Arg-133, and Asp-223 each coordinate substrate. Residues Asp-223, Asp-247, and Asp-251 each coordinate Mg(2+). An NAD(+)-binding site is contributed by 281–293 (GSAPDIAGQNKAN).

It belongs to the isocitrate and isopropylmalate dehydrogenases family. LeuB type 1 subfamily. Homodimer. Mg(2+) serves as cofactor. Mn(2+) is required as a cofactor.

It localises to the cytoplasm. It carries out the reaction (2R,3S)-3-isopropylmalate + NAD(+) = 4-methyl-2-oxopentanoate + CO2 + NADH. It functions in the pathway amino-acid biosynthesis; L-leucine biosynthesis; L-leucine from 3-methyl-2-oxobutanoate: step 3/4. In terms of biological role, catalyzes the oxidation of 3-carboxy-2-hydroxy-4-methylpentanoate (3-isopropylmalate) to 3-carboxy-4-methyl-2-oxopentanoate. The product decarboxylates to 4-methyl-2 oxopentanoate. This Neisseria meningitidis serogroup B (strain ATCC BAA-335 / MC58) protein is 3-isopropylmalate dehydrogenase.